The chain runs to 853 residues: DNA mismatch repair protein MutS (853 aa).

614–621 (GPNMGGKS) serves as a coordination point for ATP.

The protein belongs to the DNA mismatch repair MutS family.

This protein is involved in the repair of mismatches in DNA. It is possible that it carries out the mismatch recognition step. This protein has a weak ATPase activity. The polypeptide is DNA mismatch repair protein MutS (Escherichia coli (strain 55989 / EAEC)).